We begin with the raw amino-acid sequence, 134 residues long: Ribonuclease VapC1 (134 aa).

Residues 3–132 (YMLDTNIIIY…RITDLQWQDW (130 aa)) form the PINc domain. Mg(2+) is bound by residues Asp-6 and Asp-99.

It belongs to the PINc/VapC protein family. As to quaternary structure, forms a complex with VapB1. The cofactor is Mg(2+).

In terms of biological role, toxic component of a type II toxin-antitoxin (TA) system. Upon expression in E.coli inhibits growth in liquid culture. Its toxic effect is neutralized by coexpression with antitoxin VapB1. Degrades RNA but not ss- or ds-DNA in vitro, degradation is inhibited by VapB1 antitoxin. The polypeptide is Ribonuclease VapC1 (Haemophilus influenzae (strain R2866)).